The sequence spans 70 residues: Cold shock-like protein (70 aa).

The region spanning 5–65 (GTVKWFSKDK…DTKGPRAKNV (61 aa)) is the CSD domain.

It is found in the cytoplasm. This Aquifex aeolicus (strain VF5) protein is Cold shock-like protein (csp).